A 306-amino-acid chain; its full sequence is Meiotically up-regulated gene 73 protein (306 aa).

Transmembrane regions (helical) follow at residues 28-48 (YWAV…VSIF), 59-79 (FFSI…CNYG), 103-123 (YIQW…TVGV), 125-145 (ILEI…LLAA), 154-174 (WAYY…SVVL), 190-210 (FLWS…CWIL), and 224-244 (IFYS…FSWM).

Belongs to the archaeal/bacterial/fungal opsin family.

The protein localises to the membrane. In terms of biological role, has a role in meiosis. This is Meiotically up-regulated gene 73 protein (mug73) from Schizosaccharomyces pombe (strain 972 / ATCC 24843) (Fission yeast).